The following is a 471-amino-acid chain: Putative multidrug resistance protein MdtD (471 aa).

Helical transmembrane passes span 12–32 (LWIV…VNTA), 49–69 (MVVV…GWLA), 77–97 (IFFT…WSST), 102–124 (VLAR…LTVM), 138–158 (FVTL…GILV), 165–185 (WIFL…LMLM), 197–217 (LSGF…LDGS), 222–242 (LSPL…ALYL), 263–283 (FSLG…LPFM), 286–306 (VFLQ…MIPM), 342–362 (LLFM…VLFL), 396–416 (MIMQ…LGMF), and 431–451 (VFMY…LIFA).

The protein belongs to the major facilitator superfamily. TCR/Tet family.

It localises to the cell inner membrane. The protein is Putative multidrug resistance protein MdtD of Citrobacter koseri (strain ATCC BAA-895 / CDC 4225-83 / SGSC4696).